A 707-amino-acid chain; its full sequence is Acyl-CoA ligase 891, peroxisomal (707 aa).

Residue isoleucine 259–lysine 270 participates in ATP binding. Residues aspartate 525–lysine 549 form a fatty acid-binding region. The short motif at alanine 705 to leucine 707 is the Peroxisome targeting signal element.

This sequence belongs to the ATP-dependent AMP-binding enzyme family.

It localises to the peroxisome matrix. It catalyses the reaction (4E,8E)-10-(4-hydroxy-6-methoxy-7-methyl-3-oxo-1,3-dihydro-2-benzofuran-5-yl)-4,8-dimethyldeca-4,8-dienoate + ATP + CoA = (4E,8E)-10-(4-hydroxy-6-methoxy-7-methyl-3-oxo-1,3-dihydro-2-benzofuran-5-yl)-4,8-dimethyldeca-4,8-dienoyl-CoA + AMP + diphosphate. It participates in secondary metabolite biosynthesis; terpenoid biosynthesis. Its function is as follows. Acyl-CoA ligase involved in the biosynthesis of mycophenolic acid (MPA), the first isolated antibiotic natural product in the world obtained from a culture of Penicillium brevicompactum in 1893. The peroxisomal acyl-CoA ligase 891 converts the intermediate MFDHMP-3C into MFDHMP-3C-CoA which impairs its diffusion from the peroxisome. The first step of the pathway is the synthesis of 5-methylorsellinic acid (5MOA) by the cytosolic polyketide synthase mpaC. 5MOA is then converted to the phthalide compound 5,7-dihydroxy-4,6-dimethylphthalide (DHMP) by the endoplasmic reticulum-bound cytochrome P450 monooxygenase mpaDE. MpaDE first catalyzes hydroxylation of 5-MOA to 4,6-dihydroxy-2-(hydroxymethyl)-3-methylbenzoic acid (DHMB). MpaDE then acts as a lactone synthase that catalyzes the ring closure to convert DHMB into DHMP. The next step is the prenylation of DHMP by the Golgi apparatus-associated prenyltransferase mpaA to yield farnesyl-DHMP (FDHMP). The ER-bound oxygenase mpaB then mediates the oxidative cleavage the C19-C20 double bond in FDHMP to yield FDHMP-3C via a mycophenolic aldehyde intermediate. The O-methyltransferase mpaG catalyzes the methylation of FDHMP-3C to yield MFDHMP-3C. After the cytosolic methylation of FDHMP-3C, MFDHMP-3C enters into peroxisomes probably via free diffusion due to its low molecular weight. Upon a peroxisomal CoA ligation reaction, catalyzed by a beta-oxidation component enzyme acyl-CoA ligase ACL891, MFDHMP-3C-CoA would then be restricted to peroxisomes for the following beta-oxidation pathway steps. The peroxisomal beta-oxidation machinery than converts MFDHMP-3C-CoA into MPA_CoA, via a beta-oxidation chain-shortening process. Finally mpaH acts as a peroxisomal acyl-CoA hydrolase with high substrate specificity toward MPA-CoA to release the final product MPA. In Penicillium roqueforti (strain FM164), this protein is Acyl-CoA ligase 891, peroxisomal.